Consider the following 550-residue polypeptide: Probable acyl-activating enzyme 6 (550 aa).

Belongs to the ATP-dependent AMP-binding enzyme family. Expressed at low levels in roots, leaves, stems and developing seeds.

May act as an acid--thiol ligase that activates carboxylic acids by forming acyl-CoAs. The polypeptide is Probable acyl-activating enzyme 6 (AAE6) (Arabidopsis thaliana (Mouse-ear cress)).